The following is a 303-amino-acid chain: Glycine--tRNA ligase alpha subunit (303 aa).

It belongs to the class-II aminoacyl-tRNA synthetase family. In terms of assembly, tetramer of two alpha and two beta subunits.

It is found in the cytoplasm. It catalyses the reaction tRNA(Gly) + glycine + ATP = glycyl-tRNA(Gly) + AMP + diphosphate. This Klebsiella pneumoniae (strain 342) protein is Glycine--tRNA ligase alpha subunit.